A 365-amino-acid polypeptide reads, in one-letter code: Protein-glutamate methylesterase/protein-glutamine glutaminase 2 (365 aa).

Residues 18–135 (RVLIVDDSAM…GQGLPAIMRD (118 aa)) enclose the Response regulatory domain. Asp-69 is modified (4-aspartylphosphate). Positions 162 to 355 (GASEDWIHAL…ARMMLAAAAD (194 aa)) constitute a CheB-type methylesterase domain. Active-site residues include Ser-174, His-200, and Asp-297.

The protein belongs to the CheB family. Phosphorylated by CheA. Phosphorylation of the N-terminal regulatory domain activates the methylesterase activity.

It localises to the cytoplasm. The enzyme catalyses [protein]-L-glutamate 5-O-methyl ester + H2O = L-glutamyl-[protein] + methanol + H(+). It carries out the reaction L-glutaminyl-[protein] + H2O = L-glutamyl-[protein] + NH4(+). Involved in chemotaxis. Part of a chemotaxis signal transduction system that modulates chemotaxis in response to various stimuli. Catalyzes the demethylation of specific methylglutamate residues introduced into the chemoreceptors (methyl-accepting chemotaxis proteins or MCP) by CheR. Also mediates the irreversible deamidation of specific glutamine residues to glutamic acid. In Cereibacter sphaeroides (strain ATCC 17023 / DSM 158 / JCM 6121 / CCUG 31486 / LMG 2827 / NBRC 12203 / NCIMB 8253 / ATH 2.4.1.) (Rhodobacter sphaeroides), this protein is Protein-glutamate methylesterase/protein-glutamine glutaminase 2.